The chain runs to 153 residues: Actin-related protein 2/3 complex subunit 5-like protein (153 aa).

The residue at position 64 (Ser-64) is a Phosphoserine.

This sequence belongs to the ARPC5 family. As to quaternary structure, may be a component of the Arp2/3 complex in which it may replace ARPC5.

The protein localises to the cytoplasm. It is found in the cytoskeleton. May function as component of the Arp2/3 complex which is involved in regulation of actin polymerization and together with an activating nucleation-promoting factor (NPF) mediates the formation of branched actin networks. The protein is Actin-related protein 2/3 complex subunit 5-like protein (Arpc5l) of Mus musculus (Mouse).